The chain runs to 312 residues: Putative S-adenosyl-L-methionine-dependent methyltransferase BCG_1768c (312 aa).

S-adenosyl-L-methionine is bound by residues D130 and 159–160 (DL).

Belongs to the UPF0677 family.

Functionally, exhibits S-adenosyl-L-methionine-dependent methyltransferase activity. The sequence is that of Putative S-adenosyl-L-methionine-dependent methyltransferase BCG_1768c from Mycobacterium bovis (strain BCG / Pasteur 1173P2).